A 435-amino-acid polypeptide reads, in one-letter code: U-box domain-containing protein 36 (435 aa).

Residues 227 to 345 adopt a coiled-coil conformation; that stretch reads EAEASKRKAR…LKGKREEEEA (119 aa). A U-box domain is found at 352 to 426; sequence EPPQYFICPI…QEWLQLRELL (75 aa).

The enzyme catalyses S-ubiquitinyl-[E2 ubiquitin-conjugating enzyme]-L-cysteine + [acceptor protein]-L-lysine = [E2 ubiquitin-conjugating enzyme]-L-cysteine + N(6)-ubiquitinyl-[acceptor protein]-L-lysine.. The protein operates within protein modification; protein ubiquitination. Functionally, functions as an E3 ubiquitin ligase. The sequence is that of U-box domain-containing protein 36 (PUB36) from Arabidopsis thaliana (Mouse-ear cress).